We begin with the raw amino-acid sequence, 65 residues long: Beta-defensin 106A (65 aa).

Residues 1 to 20 (MRTFLFLFVVLFFLTPAKNA) form the signal peptide. Cystine bridges form between Cys-26–Cys-53, Cys-33–Cys-47, and Cys-37–Cys-54.

It belongs to the beta-defensin family. As to quaternary structure, monomer. Interacts with CCR2 (via extracellular N-terminal region); this interaction may preferentially require specific tyrosine sulfation on CCR2.

Its subcellular location is the secreted. It is found in the membrane. Has antibacterial activity. Acts as a ligand for C-C chemokine receptor CCR2. The polypeptide is Beta-defensin 106A (DEFB106A) (Hylobates lar (Lar gibbon)).